Reading from the N-terminus, the 367-residue chain is Anhydro-N-acetylmuramic acid kinase (367 aa).

An ATP-binding site is contributed by 13-20; sequence GTSMDGAD.

This sequence belongs to the anhydro-N-acetylmuramic acid kinase family.

The catalysed reaction is 1,6-anhydro-N-acetyl-beta-muramate + ATP + H2O = N-acetyl-D-muramate 6-phosphate + ADP + H(+). It functions in the pathway amino-sugar metabolism; 1,6-anhydro-N-acetylmuramate degradation. Its pathway is cell wall biogenesis; peptidoglycan recycling. In terms of biological role, catalyzes the specific phosphorylation of 1,6-anhydro-N-acetylmuramic acid (anhMurNAc) with the simultaneous cleavage of the 1,6-anhydro ring, generating MurNAc-6-P. Is required for the utilization of anhMurNAc either imported from the medium or derived from its own cell wall murein, and thus plays a role in cell wall recycling. The chain is Anhydro-N-acetylmuramic acid kinase from Neisseria meningitidis serogroup C / serotype 2a (strain ATCC 700532 / DSM 15464 / FAM18).